Consider the following 221-residue polypeptide: Chalcone--flavanone isomerase (221 aa).

The substrate site is built by Thr-52, Asn-117, and Ser-193.

The protein belongs to the chalcone isomerase family. As to expression, flowers.

It catalyses the reaction a chalcone = a flavanone.. The protein operates within secondary metabolite biosynthesis; flavonoid biosynthesis. In terms of biological role, catalyzes the intramolecular cyclization of bicyclic chalcones into tricyclic (S)-flavanones. Responsible for the isomerization of 4,2',4',6'-tetrahydroxychalcone (also termed chalcone) into naringenin. This chain is Chalcone--flavanone isomerase (CHI), found in Gentiana triflora (Clustered gentian).